The chain runs to 159 residues: Probable acetolactate synthase small subunit (159 aa).

An ACT domain is found at Thr4–Glu78.

The protein belongs to the acetolactate synthase small subunit family. As to quaternary structure, dimer of large and small chains.

It carries out the reaction 2 pyruvate + H(+) = (2S)-2-acetolactate + CO2. Its pathway is amino-acid biosynthesis; L-isoleucine biosynthesis; L-isoleucine from 2-oxobutanoate: step 1/4. It functions in the pathway amino-acid biosynthesis; L-valine biosynthesis; L-valine from pyruvate: step 1/4. This is Probable acetolactate synthase small subunit (ilvH) from Archaeoglobus fulgidus (strain ATCC 49558 / DSM 4304 / JCM 9628 / NBRC 100126 / VC-16).